Reading from the N-terminus, the 225-residue chain is Uracil-DNA glycosylase (225 aa).

D65 functions as the Proton acceptor in the catalytic mechanism.

It belongs to the uracil-DNA glycosylase (UDG) superfamily. UNG family.

The protein localises to the cytoplasm. The catalysed reaction is Hydrolyzes single-stranded DNA or mismatched double-stranded DNA and polynucleotides, releasing free uracil.. Excises uracil residues from the DNA which can arise as a result of misincorporation of dUMP residues by DNA polymerase or due to deamination of cytosine. The chain is Uracil-DNA glycosylase from Bacillus cereus (strain ATCC 10987 / NRS 248).